A 359-amino-acid polypeptide reads, in one-letter code: DNA replication and repair protein RecF (359 aa).

30-37 contributes to the ATP binding site; it reads GPNGSGKT.

This sequence belongs to the RecF family.

Its subcellular location is the cytoplasm. The RecF protein is involved in DNA metabolism; it is required for DNA replication and normal SOS inducibility. RecF binds preferentially to single-stranded, linear DNA. It also seems to bind ATP. The protein is DNA replication and repair protein RecF of Vibrio vulnificus (strain YJ016).